Reading from the N-terminus, the 937-residue chain is AP-2 complex subunit beta (937 aa).

Thr-2 is subject to N-acetylthreonine. Phosphoserine is present on Ser-4. Lys-265 is modified (N6-acetyllysine). Positions 593–617 (LPIHHGSTDAGDSPVGTTTTTNLEQ) are disordered. The span at 607-617 (VGTTTTTNLEQ) shows a compositional bias: polar residues. Residues Tyr-737 and Tyr-928 each carry the phosphotyrosine modification.

Belongs to the adaptor complexes large subunit family. As to quaternary structure, adaptor protein complex 2 (AP-2) is a heterotetramer composed of two large adaptins (alpha-type subunit AP2A1 or AP2A2 and beta-type subunit AP2B1), a medium adaptin (mu-type subunit AP2M1) and a small adaptin (sigma-type subunit AP2S1). Interacts with EPN1. Interacts with EPS15; clathrin competes with EPS15. Interacts with SNAP91; clathrin competes with SNAP91. Interacts with CLTC; clathrin competes with EPS15, SNAP91 and PIP5K1C. Interacts with LDLRAP1. Interacts with AMPH and BIN1. Interacts with ARF6 (GDP-bound). Interacts (dephosphorylated at Tyr-737) with ARRB1; phosphorylation of AP2B1 at Tyr-737 disrupts the interaction. Interacts with SLC2A8. Interacts with SCYL1 and SCYL2. Interacts with TGFBR1 and TGFBR2. Interacts with PIP5K1C; clathrin competes with PIP5K1C. Interacts with DENND1B. Interacts with FCHO1. Interacts with RFTN1. Interacts with KIAA1107. Together with AP2A1 or AP2A2 and AP2M1, it interacts with ADAM10; this interaction facilitates ADAM10 endocytosis from the plasma membrane during long-term potentiation in hippocampal neurons. As to expression, expressed in the brain (at protein level).

The protein localises to the cell membrane. It localises to the membrane. Its subcellular location is the coated pit. Its function is as follows. Component of the adaptor protein complex 2 (AP-2). Adaptor protein complexes function in protein transport via transport vesicles in different membrane traffic pathways. Adaptor protein complexes are vesicle coat components and appear to be involved in cargo selection and vesicle formation. AP-2 is involved in clathrin-dependent endocytosis in which cargo proteins are incorporated into vesicles surrounded by clathrin (clathrin-coated vesicles, CCVs) which are destined for fusion with the early endosome. The clathrin lattice serves as a mechanical scaffold but is itself unable to bind directly to membrane components. Clathrin-associated adaptor protein (AP) complexes which can bind directly to both the clathrin lattice and to the lipid and protein components of membranes are considered to be the major clathrin adaptors contributing the CCV formation. AP-2 also serves as a cargo receptor to selectively sort the membrane proteins involved in receptor-mediated endocytosis. AP-2 seems to play a role in the recycling of synaptic vesicle membranes from the presynaptic surface. AP-2 recognizes Y-X-X-[FILMV] (Y-X-X-Phi) and [ED]-X-X-X-L-[LI] endocytosis signal motifs within the cytosolic tails of transmembrane cargo molecules. AP-2 may also play a role in maintaining normal post-endocytic trafficking through the ARF6-regulated, non-clathrin pathway. During long-term potentiation in hippocampal neurons, AP-2 is responsible for the endocytosis of ADAM10. The AP-2 beta subunit acts via its C-terminal appendage domain as a scaffolding platform for endocytic accessory proteins; at least some clathrin-associated sorting proteins (CLASPs) are recognized by their [DE]-X(1,2)-F-X-X-[FL]-X-X-X-R motif. The AP-2 beta subunit binds to clathrin heavy chain, promoting clathrin lattice assembly; clathrin displaces at least some CLASPs from AP2B1 which probably then can be positioned for further coat assembly. The chain is AP-2 complex subunit beta (Ap2b1) from Mus musculus (Mouse).